The primary structure comprises 306 residues: Secretory carrier-associated membrane protein 1 (306 aa).

A disordered region spans residues 1–66 (MAGRYDSNPF…LPPEPAAFGA (66 aa)). The Cytoplasmic segment spans residues 1-141 (MAGRYDSNPF…EIPSHLQRMQ (141 aa)). A compositionally biased stretch (gly residues) spans 25 to 36 (KAGGQPSYGGGA). Low complexity predominate over residues 40-55 (PNPRNVPSVSSNSRLS). Residues 72–109 (LDSSKDLKNREKELQAREAELNKREKELKRREEAAARA) adopt a coiled-coil conformation. The next 4 helical transmembrane spans lie at 142–162 (YVAF…VIAV), 174–194 (IWLL…VLWY), 209–229 (FGLF…SAVA), and 257–277 (IFYF…IWVI). Over 278-306 (QQVYMYFRGSGKAAEMKRDATRGAMRAAF) the chain is Cytoplasmic.

This sequence belongs to the SCAMP family.

The protein localises to the cell membrane. Its subcellular location is the cytoplasmic vesicle. It is found in the secretory vesicle membrane. Its function is as follows. Probably involved in membrane trafficking. In Oryza sativa subsp. japonica (Rice), this protein is Secretory carrier-associated membrane protein 1 (SCAMP1).